The following is a 483-amino-acid chain: Acetyl-coenzyme A carboxylase carboxyl transferase subunit beta, chloroplastic (483 aa).

Positions 221-483 constitute a CoA carboxyltransferase N-terminal domain; the sequence is LWVQCENCYG…FQFHGFFPRP (263 aa). Residues Cys-225, Cys-228, Cys-244, and Cys-247 each contribute to the Zn(2+) site. The C4-type zinc finger occupies 225–247; sequence CENCYGLNYKKFFSSKMNICEQC.

Belongs to the AccD/PCCB family. Acetyl-CoA carboxylase is a heterohexamer composed of biotin carboxyl carrier protein, biotin carboxylase and 2 subunits each of ACCase subunit alpha and ACCase plastid-coded subunit beta (accD). It depends on Zn(2+) as a cofactor.

The protein resides in the plastid. Its subcellular location is the chloroplast stroma. The enzyme catalyses N(6)-carboxybiotinyl-L-lysyl-[protein] + acetyl-CoA = N(6)-biotinyl-L-lysyl-[protein] + malonyl-CoA. Its pathway is lipid metabolism; malonyl-CoA biosynthesis; malonyl-CoA from acetyl-CoA: step 1/1. Component of the acetyl coenzyme A carboxylase (ACC) complex. Biotin carboxylase (BC) catalyzes the carboxylation of biotin on its carrier protein (BCCP) and then the CO(2) group is transferred by the transcarboxylase to acetyl-CoA to form malonyl-CoA. The chain is Acetyl-coenzyme A carboxylase carboxyl transferase subunit beta, chloroplastic from Nuphar advena (Common spatterdock).